A 301-amino-acid chain; its full sequence is uncharacterized protein (301 aa).

Positions 146, 148, and 177 each coordinate a divalent metal cation.

This sequence belongs to the FAH family.

This is an uncharacterized protein from Staphylococcus saprophyticus subsp. saprophyticus (strain ATCC 15305 / DSM 20229 / NCIMB 8711 / NCTC 7292 / S-41).